The primary structure comprises 37 residues: Tick defensin 2 (37 aa).

3 disulfide bridges follow: Cys-4-Cys-26, Cys-11-Cys-34, and Cys-15-Cys-36.

The protein belongs to the invertebrate defensin family.

It is found in the secreted. In terms of biological role, antibacterial peptide mostly active against Gram-positive bacteria (MIC=0.24 ug/ml on Bacillus subtilis, and MIC=0.94 ug/ml on Micrococcus luteus, MIC&gt;120 ug/ml on both Escherichia coli and Pseudomonas aeruginosa). This is Tick defensin 2 from Ornithodoros savignyi (African eyed tampan).